Consider the following 616-residue polypeptide: GPI mannosyltransferase 3 (616 aa).

The Cytoplasmic portion of the chain corresponds to 1-16 (MAHEVHRIKPKLGRTQ). Residues 17–37 (IFWVFLAFRVLNAVLTRTFFQ) traverse the membrane as a helical segment. Topologically, residues 38 to 86 (ADEFWQALEPAHWKAFKYGELTWEWKFGVRSYLFPMIFELTYRLVSLSS) are lumenal. A helical transmembrane segment spans residues 87–107 (ILLHYALLLLSTIGSDLLILL). Topologically, residues 108–136 (LPKYELSWQVAEDLKRLPFDVTRSFEYYG) are cytoplasmic. The chain crosses the membrane as a helical span at residues 137–157 (VIYAPKIVMAVLASIGEYYIV). Residues 158-188 (RFVQKLYLLTLDKRNEKEEEERRSGLSEITK) are Lumenal-facing. A helical transmembrane segment spans residues 189–209 (FALLLSLTNFFNCFFITRTFI). The Cytoplasmic portion of the chain corresponds to 210-240 (NSFEMILTSIALYYWDWTGGQMIKESSFTKS). The helical transmembrane segment at 241–261 (LIFAFLACLQRPSSGLIWVIP) threads the bilayer. Over 262–278 (SISLILNLVGKKQYHLL) the chain is Lumenal. The helical transmembrane segment at 279-299 (FITFSKVLRSFFLVFTANAII) threads the bilayer. The Cytoplasmic portion of the chain corresponds to 300–338 (DMYFYEKVTFPFFRFLKFNFTTPLSKFYGVAPWHFHFFQ). The helical transmembrane segment at 339-359 (SLPIVLGASIPAFAFGLFFPL) threads the bilayer. The Lumenal portion of the chain corresponds to 360–392 (SKRSFPKKYLNPFFQVKLTILLNLLVYSTLPHK). The helical transmembrane segment at 393-413 (EFRFIFPLQPLFILISSFGLL) threads the bilayer. The Cytoplasmic segment spans residues 414 to 423 (RLDRDYWKRL). Residues 424 to 444 (SGLKSLLWLVPFVSVFIALLL) form a helical membrane-spanning segment. The Lumenal portion of the chain corresponds to 445–616 (DTFHESGSIE…DYSDIPAADI (172 aa)).

This sequence belongs to the glycosyltransferase 22 family. PIGB subfamily.

The protein resides in the endoplasmic reticulum membrane. The protein operates within glycolipid biosynthesis; glycosylphosphatidylinositol-anchor biosynthesis. Functionally, mannosyltransferase involved in glycosylphosphatidylinositol-anchor biosynthesis. Transfers the third mannose to Man2-GlcN-acyl-PI during GPI precursor assembly. The polypeptide is GPI mannosyltransferase 3 (GPI10) (Saccharomyces cerevisiae (strain ATCC 204508 / S288c) (Baker's yeast)).